A 229-amino-acid polypeptide reads, in one-letter code: Urease accessory protein UreF (229 aa).

Belongs to the UreF family. UreD, UreF and UreG form a complex that acts as a GTP-hydrolysis-dependent molecular chaperone, activating the urease apoprotein by helping to assemble the nickel containing metallocenter of UreC. The UreE protein probably delivers the nickel.

The protein resides in the cytoplasm. Its function is as follows. Required for maturation of urease via the functional incorporation of the urease nickel metallocenter. In Staphylococcus saprophyticus subsp. saprophyticus (strain ATCC 15305 / DSM 20229 / NCIMB 8711 / NCTC 7292 / S-41), this protein is Urease accessory protein UreF.